We begin with the raw amino-acid sequence, 286 residues long: Polyamine aminopropyltransferase (286 aa).

Positions 5–238 (TMWHETLHDQ…GIMTFAWATD (234 aa)) constitute a PABS domain. Q33 contacts S-methyl-5'-thioadenosine. Spermidine contacts are provided by H64 and D88. Residues E108 and 140 to 141 (DG) contribute to the S-methyl-5'-thioadenosine site. D158 acts as the Proton acceptor in catalysis. 158 to 161 (DCTD) lines the spermidine pocket. P165 contacts S-methyl-5'-thioadenosine.

Belongs to the spermidine/spermine synthase family. In terms of assembly, homodimer or homotetramer.

The protein resides in the cytoplasm. It catalyses the reaction S-adenosyl 3-(methylsulfanyl)propylamine + putrescine = S-methyl-5'-thioadenosine + spermidine + H(+). Its pathway is amine and polyamine biosynthesis; spermidine biosynthesis; spermidine from putrescine: step 1/1. In terms of biological role, catalyzes the irreversible transfer of a propylamine group from the amino donor S-adenosylmethioninamine (decarboxy-AdoMet) to putrescine (1,4-diaminobutane) to yield spermidine. The sequence is that of Polyamine aminopropyltransferase from Salmonella schwarzengrund (strain CVM19633).